The chain runs to 317 residues: tRNA pseudouridine synthase B (317 aa).

Catalysis depends on D47, which acts as the Nucleophile.

It belongs to the pseudouridine synthase TruB family. Type 1 subfamily.

The catalysed reaction is uridine(55) in tRNA = pseudouridine(55) in tRNA. Its function is as follows. Responsible for synthesis of pseudouridine from uracil-55 in the psi GC loop of transfer RNAs. This is tRNA pseudouridine synthase B from Vibrio atlanticus (strain LGP32) (Vibrio splendidus (strain Mel32)).